The following is a 750-amino-acid chain: Catalase-peroxidase 1 (750 aa).

The segment at residues 90–238 (WHSAGTYRVM…VSAAHMGLIY (149 aa)) is a cross-link (tryptophyl-tyrosyl-methioninium (Trp-Tyr) (with M-264)). H91 functions as the Proton acceptor in the catalytic mechanism. Positions 199 to 218 (NEGHKESGVIDGSESKKGHK) are disordered. Over residues 200–218 (EGHKESGVIDGSESKKGHK) the composition is skewed to basic and acidic residues. Positions 238-264 (YVNPEGPDGIPDPVAAARDIRTTFSRM) form a cross-link, tryptophyl-tyrosyl-methioninium (Tyr-Met) (with W-90). A heme b-binding site is contributed by H279.

The protein belongs to the peroxidase family. Peroxidase/catalase subfamily. In terms of assembly, homodimer or homotetramer. Predominantly homodimeric. The cofactor is heme b. Post-translationally, formation of the three residue Trp-Tyr-Met cross-link is important for the catalase, but not the peroxidase activity of the enzyme.

Its subcellular location is the cytoplasm. It catalyses the reaction H2O2 + AH2 = A + 2 H2O. The enzyme catalyses 2 H2O2 = O2 + 2 H2O. Its function is as follows. Bifunctional enzyme with both catalase and broad-spectrum peroxidase activity. The protein is Catalase-peroxidase 1 of Pyricularia oryzae (strain 70-15 / ATCC MYA-4617 / FGSC 8958) (Rice blast fungus).